The sequence spans 360 residues: Photosystem II protein D1 3 (360 aa).

A run of 3 helical transmembrane segments spans residues 29 to 46 (YVGWFGVLMIPTLLAATI), 118 to 133 (HFLIGVFCYMGREWEL), and 142 to 156 (WICVAYSAPVAAATA). Residue histidine 118 coordinates chlorophyll a. Tyrosine 126 contributes to the pheophytin a binding site. Residues aspartate 170 and glutamate 189 each coordinate [CaMn4O5] cluster. Residues 197–218 (FHQLGVAGVFGGALFSAMHGSL) form a helical membrane-spanning segment. Histidine 198 is a binding site for chlorophyll a. A quinone-binding positions include histidine 215 and 264-265 (SF). Histidine 215 provides a ligand contact to Fe cation. Histidine 272 provides a ligand contact to Fe cation. The helical transmembrane segment at 274–288 (FLAAWPVIGIWFTAL) threads the bilayer. Positions 332, 333, 342, and 344 each coordinate [CaMn4O5] cluster. A propeptide spanning residues 345–360 (SAESAPVAMIAPSING) is cleaved from the precursor.

Belongs to the reaction center PufL/M/PsbA/D family. As to quaternary structure, PSII is composed of 1 copy each of membrane proteins PsbA, PsbB, PsbC, PsbD, PsbE, PsbF, PsbH, PsbI, PsbJ, PsbK, PsbL, PsbM, PsbT, PsbX, PsbY, PsbZ, Psb30/Ycf12, peripheral proteins PsbO, CyanoQ (PsbQ), PsbU, PsbV and a large number of cofactors. It forms dimeric complexes. Precursor protein interacts with Ycf48. The cofactor is The D1/D2 heterodimer binds P680, chlorophylls that are the primary electron donor of PSII, and subsequent electron acceptors. It shares a non-heme iron and each subunit binds pheophytin, quinone, additional chlorophylls, carotenoids and lipids. D1 provides most of the ligands for the Mn4-Ca-O5 cluster of the oxygen-evolving complex (OEC). There is also a Cl(-1) ion associated with D1 and D2, which is required for oxygen evolution. The PSII complex binds additional chlorophylls, carotenoids and specific lipids.. In terms of processing, C-terminally processed by CtpA; processing is essential to allow assembly of the oxygen-evolving complex and thus photosynthetic growth. Post-translationally, tyr-161 forms a radical intermediate that is referred to as redox-active TyrZ, YZ or Y-Z.

It is found in the cellular thylakoid membrane. The enzyme catalyses 2 a plastoquinone + 4 hnu + 2 H2O = 2 a plastoquinol + O2. In terms of biological role, photosystem II (PSII) is a light-driven water:plastoquinone oxidoreductase that uses light energy to abstract electrons from H(2)O, generating O(2) and a proton gradient subsequently used for ATP formation. It consists of a core antenna complex that captures photons, and an electron transfer chain that converts photonic excitation into a charge separation. The D1/D2 (PsbA/PsbD) reaction center heterodimer binds P680, the primary electron donor of PSII as well as several subsequent electron acceptors. This chain is Photosystem II protein D1 3, found in Thermosynechococcus vestitus (strain NIES-2133 / IAM M-273 / BP-1).